The sequence spans 286 residues: 2-oxoglutarate synthase subunit KorB (286 aa).

Heterotetramer of the KorA, KorB, KorC and KorD subunits.

The enzyme catalyses 2 oxidized [2Fe-2S]-[ferredoxin] + 2-oxoglutarate + CoA = succinyl-CoA + 2 reduced [2Fe-2S]-[ferredoxin] + CO2 + H(+). The protein is 2-oxoglutarate synthase subunit KorB (korB) of Methanothermobacter thermautotrophicus (strain ATCC 29096 / DSM 1053 / JCM 10044 / NBRC 100330 / Delta H) (Methanobacterium thermoautotrophicum).